A 186-amino-acid chain; its full sequence is Ribosome-recycling factor (186 aa).

This sequence belongs to the RRF family.

The protein resides in the cytoplasm. In terms of biological role, responsible for the release of ribosomes from messenger RNA at the termination of protein biosynthesis. May increase the efficiency of translation by recycling ribosomes from one round of translation to another. This chain is Ribosome-recycling factor, found in Herminiimonas arsenicoxydans.